The primary structure comprises 274 residues: MEQYYMVIDVAKCQDCNNCFMGCMDEHELNEWPGYTASMQRGHRWMNIERRERGTYPRNDINYRPTPCMHCENAPCVAKGNGAVYQREDGIVLIDPEKAKGKKELLDTCPYGVMYWNEEENVAQKCTMCAHLLDDESWAPKMPRCAHNCGSFVYEFLKTTPEAMAKKVEEEGLEVIKPELGTKPRVYYKNLYRFEKNYVTAGILVQGDCFEGAKVVLKSGGKEVASAETNFFGEFKFDALDNGEYTVEIDADGKSYSDTVVIDDKSVDLGFIKL.

Residues cysteine 13, cysteine 16, cysteine 19, cysteine 23, cysteine 68, cysteine 71, cysteine 76, cysteine 109, cysteine 126, cysteine 129, cysteine 145, and cysteine 149 each contribute to the [4Fe-4S] cluster site.

In terms of assembly, heterodimer of a large and a small subunit. [4Fe-4S] cluster serves as cofactor.

The catalysed reaction is 1,2,3,5-tetrahydroxybenzene + 1,2,3-trihydroxybenzene = 1,2,3,5-tetrahydroxybenzene + 1,3,5-trihydroxybenzene. Functionally, isomerization of pyrogallol to phloroglucin. This is Pyrogallol hydroxytransferase small subunit (bthL) from Pelobacter acidigallici.